Here is a 359-residue protein sequence, read N- to C-terminus: Spermine synthase (359 aa).

Residues 53–304 (SGWFSEPHPR…GVIGFVLCST (252 aa)) enclose the PABS domain. Position 99 (Gln-99) interacts with S-adenosyl 3-(methylsulfanyl)propylamine. Residue Tyr-129 coordinates spermidine. S-adenosyl 3-(methylsulfanyl)propylamine is bound at residue Gln-130. Residue Asp-154 participates in spermidine binding. Residues Glu-174 and 205 to 206 (DA) contribute to the S-adenosyl 3-(methylsulfanyl)propylamine site. The active-site Proton acceptor is Asp-224. Residue Tyr-292 participates in putrescine binding.

Belongs to the spermidine/spermine synthase family. In terms of assembly, heterodimer. Component of a multiprotein complex. Interacts with SPDSYN1 and SPDSYN2. Expressed predominantly in stem internodes, flower buds and roots.

It carries out the reaction S-adenosyl 3-(methylsulfanyl)propylamine + spermidine = spermine + S-methyl-5'-thioadenosine + H(+). It participates in amine and polyamine biosynthesis; spermine biosynthesis; spermine from spermidine: step 1/1. The chain is Spermine synthase (SPMS) from Arabidopsis thaliana (Mouse-ear cress).